Consider the following 285-residue polypeptide: Nucleotide-binding protein in ptsN-ptsO intergenic region (285 aa).

ATP is bound at residue 8 to 15; that stretch reads GRSGSGKS. 60-63 contacts GTP; the sequence is DARN.

It belongs to the RapZ-like family.

Functionally, displays ATPase and GTPase activities. In Stutzerimonas stutzeri (Pseudomonas stutzeri), this protein is Nucleotide-binding protein in ptsN-ptsO intergenic region.